Consider the following 168-residue polypeptide: Cofilin-1-B (168 aa).

The residue at position 2 (Ala2) is an N-acetylalanine. An ADF-H domain is found at 4–153; it reads GVMVSDDVVK…NDPCNLADKL (150 aa). The short motif at 30–34 is the Nuclear localization signal element; the sequence is KKRKK.

The protein belongs to the actin-binding proteins ADF family. Post-translationally, inactive when phosphorylated. Phosphorylation levels vary during development. Oocytes contain only the phosphorylated form, and 80-95% of cfl1 protein is phosphorylated in unfertilized eggs. Rapid dephosphorylation occurs within 30 minutes after fertilization. Phosphorylation levels increase again between the morula and blastula stages (5-8 hpf) and then decrease again as gastrulation approaches. Dephosphorylated by pdxp. In terms of tissue distribution, expressed diffusely in both animal and vegetal hemispheres of the oocyte. During cleavage, expression accumulates around the cleavage furrow, along the vegetal membrane, and later in the midbody. Strongly expressed in the animal hemisphere during blastula stages, with most cells showing expression by gastrulation. By stage 17, expression is highest in cells of the developing neuroectoderm, and at stage 24 the notochord, neural tube, neural crest, somites and some cells of the archenteron show high expression. By stage 35, expression has declined in the notochord, but remains in the neural tube, epidermis and a layer of cells in the archenteron. Also highly expressed in the retina and neuronal cell bodies at the base of the cement gland but not the cement gland itself. At stage 38, expression is widespread, being highest in the nervous system and retina. In the adult, expression is high in the brain, heart, oocyte, stomach, and low in skeletal muscle.

The protein localises to the nucleus matrix. It localises to the cytoplasm. Its subcellular location is the cytoskeleton. The protein resides in the cell cortex. It is found in the membrane. Functionally, may play a role in the regulation of cell morphology and cytoskeletal organization. Binds to F-actin and exhibits pH-sensitive F-actin depolymerizing activity. Required for formation of the cleavage furrow during cytokinesis. The polypeptide is Cofilin-1-B (cfl1-b) (Xenopus laevis (African clawed frog)).